Reading from the N-terminus, the 493-residue chain is Cardiolipin synthase 1 (493 aa).

Helical transmembrane passes span 13-33 (FTII…IIIF) and 45-65 (WAWL…YLFF). PLD phosphodiesterase domains lie at 228–255 (MNNR…GDEY) and 406–433 (ENGF…DFRS). Catalysis depends on residues histidine 233, lysine 235, aspartate 240, histidine 411, lysine 413, and aspartate 418.

It belongs to the phospholipase D family. Cardiolipin synthase subfamily.

Its subcellular location is the cell membrane. It catalyses the reaction 2 a 1,2-diacyl-sn-glycero-3-phospho-(1'-sn-glycerol) = a cardiolipin + glycerol. Its function is as follows. Catalyzes the reversible phosphatidyl group transfer from one phosphatidylglycerol molecule to another to form cardiolipin (CL) (diphosphatidylglycerol) and glycerol. In Staphylococcus aureus (strain MRSA252), this protein is Cardiolipin synthase 1 (cls1).